We begin with the raw amino-acid sequence, 147 residues long: MKILVMNGPNINFLGIREKGIYGEQNYEALVSMIQKKAEELGADVEVFQSNHEGAIIDKIQEAYYNDVDGIVINPGAFTHYSYAVRDALASVAAIPKIEVHISNVHTREEFRHTSVTVPVCNGQVVGLGLKGYLYAMEAVVDLAMKK.

The Proton acceptor role is filled by tyrosine 22. Residues asparagine 74, histidine 80, and aspartate 87 each contribute to the substrate site. The Proton donor role is filled by histidine 101. Residues 102 to 103 and arginine 112 each bind substrate; that span reads IS.

Belongs to the type-II 3-dehydroquinase family. In terms of assembly, homododecamer.

It catalyses the reaction 3-dehydroquinate = 3-dehydroshikimate + H2O. It functions in the pathway metabolic intermediate biosynthesis; chorismate biosynthesis; chorismate from D-erythrose 4-phosphate and phosphoenolpyruvate: step 3/7. In terms of biological role, catalyzes a trans-dehydration via an enolate intermediate. The protein is 3-dehydroquinate dehydratase of Lachnospira eligens (strain ATCC 27750 / DSM 3376 / VPI C15-48 / C15-B4) (Eubacterium eligens).